The sequence spans 343 residues: Protein RecA (343 aa).

An ATP-binding site is contributed by 68 to 75 (GPESSGKT).

Belongs to the RecA family.

Its subcellular location is the cytoplasm. Its function is as follows. Can catalyze the hydrolysis of ATP in the presence of single-stranded DNA, the ATP-dependent uptake of single-stranded DNA by duplex DNA, and the ATP-dependent hybridization of homologous single-stranded DNAs. It interacts with LexA causing its activation and leading to its autocatalytic cleavage. The sequence is that of Protein RecA from Syntrophobacter fumaroxidans (strain DSM 10017 / MPOB).